Here is a 968-residue protein sequence, read N- to C-terminus: RNA polymerase-associated protein RapA (968 aa).

The region spanning 164–334 (DVGRRHAPRV…FARLRLLDPN (171 aa)) is the Helicase ATP-binding domain. 177–184 (DEVGLGKT) is a binding site for ATP. The DEAH box signature appears at 280-283 (DEAH). Positions 490 to 685 (RVEWLMGYLT…ALKAQLEQGR (196 aa)) constitute a Helicase C-terminal domain.

This sequence belongs to the SNF2/RAD54 helicase family. RapA subfamily. Interacts with the RNAP. Has a higher affinity for the core RNAP than for the holoenzyme. Its ATPase activity is stimulated by binding to RNAP.

Transcription regulator that activates transcription by stimulating RNA polymerase (RNAP) recycling in case of stress conditions such as supercoiled DNA or high salt concentrations. Probably acts by releasing the RNAP, when it is trapped or immobilized on tightly supercoiled DNA. Does not activate transcription on linear DNA. Probably not involved in DNA repair. The chain is RNA polymerase-associated protein RapA from Salmonella typhi.